Consider the following 455-residue polypeptide: Bifunctional protein GlmU (455 aa).

Residues 1-225 are pyrophosphorylase; it reads MNIVILAAGL…EWETLGVNSK (225 aa). UDP-N-acetyl-alpha-D-glucosamine-binding positions include 6-9, Lys-20, Gln-71, 76-77, 98-100, Gly-135, Glu-150, Asn-165, and Asn-223; these read LAAG, GT, and YGD. Asp-100 contacts Mg(2+). A Mg(2+)-binding site is contributed by Asn-223. The linker stretch occupies residues 226–246; sequence VQLAELERIHQRNLAQQLLED. Residues 247-455 are N-acetyltransferase; the sequence is GVTLIDPARI…QRPVKQKKDA (209 aa). Residues Arg-329 and Lys-347 each contribute to the UDP-N-acetyl-alpha-D-glucosamine site. His-359 (proton acceptor) is an active-site residue. UDP-N-acetyl-alpha-D-glucosamine is bound by residues Tyr-362 and Asn-373. Acetyl-CoA is bound by residues Ala-376, 382 to 383, Ser-401, Ala-419, and Arg-436; that span reads NY.

This sequence in the N-terminal section; belongs to the N-acetylglucosamine-1-phosphate uridyltransferase family. In the C-terminal section; belongs to the transferase hexapeptide repeat family. Homotrimer. Requires Mg(2+) as cofactor.

The protein localises to the cytoplasm. The catalysed reaction is alpha-D-glucosamine 1-phosphate + acetyl-CoA = N-acetyl-alpha-D-glucosamine 1-phosphate + CoA + H(+). It carries out the reaction N-acetyl-alpha-D-glucosamine 1-phosphate + UTP + H(+) = UDP-N-acetyl-alpha-D-glucosamine + diphosphate. The protein operates within nucleotide-sugar biosynthesis; UDP-N-acetyl-alpha-D-glucosamine biosynthesis; N-acetyl-alpha-D-glucosamine 1-phosphate from alpha-D-glucosamine 6-phosphate (route II): step 2/2. It participates in nucleotide-sugar biosynthesis; UDP-N-acetyl-alpha-D-glucosamine biosynthesis; UDP-N-acetyl-alpha-D-glucosamine from N-acetyl-alpha-D-glucosamine 1-phosphate: step 1/1. Its pathway is bacterial outer membrane biogenesis; LPS lipid A biosynthesis. Catalyzes the last two sequential reactions in the de novo biosynthetic pathway for UDP-N-acetylglucosamine (UDP-GlcNAc). The C-terminal domain catalyzes the transfer of acetyl group from acetyl coenzyme A to glucosamine-1-phosphate (GlcN-1-P) to produce N-acetylglucosamine-1-phosphate (GlcNAc-1-P), which is converted into UDP-GlcNAc by the transfer of uridine 5-monophosphate (from uridine 5-triphosphate), a reaction catalyzed by the N-terminal domain. The chain is Bifunctional protein GlmU from Ralstonia nicotianae (strain ATCC BAA-1114 / GMI1000) (Ralstonia solanacearum).